The primary structure comprises 155 residues: Ribosomal RNA large subunit methyltransferase H (155 aa).

S-adenosyl-L-methionine contacts are provided by residues Leu72, Gly103, and 122 to 127 (LSDLTL).

The protein belongs to the RNA methyltransferase RlmH family. As to quaternary structure, homodimer.

The protein localises to the cytoplasm. It carries out the reaction pseudouridine(1915) in 23S rRNA + S-adenosyl-L-methionine = N(3)-methylpseudouridine(1915) in 23S rRNA + S-adenosyl-L-homocysteine + H(+). Specifically methylates the pseudouridine at position 1915 (m3Psi1915) in 23S rRNA. The protein is Ribosomal RNA large subunit methyltransferase H of Acidovorax sp. (strain JS42).